The sequence spans 505 residues: Gap junction alpha-10 protein (505 aa).

Over 1–16 (MGDWNLLGGILEEVHS) the chain is Cytoplasmic. A helical transmembrane segment spans residues 17–37 (HSTIVGKIWLTILFIFRMLVL). Residues 38 to 76 (GVAAEDVWDDEQSAFACNTQQPGCNNICYDDAFPISLIR) lie on the Extracellular side of the membrane. Residues 77–97 (FWVLQIIFVSSPSLVYMGHAL) traverse the membrane as a helical segment. Over 98–165 (YRLRDFEKQR…TYVLHILTRS (68 aa)) the chain is Cytoplasmic. The chain crosses the membrane as a helical span at residues 166–186 (VLEVGFMIGQYILYGFQMHPI). Topologically, residues 187–209 (YKCTQAPCPNSVDCFVSRPTEKT) are extracellular. Residues 210–230 (IFMLFMHSIAAISLLLNILEI) form a helical membrane-spanning segment. At 231–505 (FHLGIRKIMR…IIHETYVYVY (275 aa)) the chain is on the cytoplasmic side. Polar residues predominate over residues 371–383 (TMTASQHRPSSAL). The segment at 371–491 (TMTASQHRPS…SKSSHVDSPP (121 aa)) is disordered. The span at 437-446 (MSEKGQRHSD) shows a compositional bias: basic and acidic residues. The span at 447-460 (SGSSRSLNSSCLDF) shows a compositional bias: low complexity.

It belongs to the connexin family. Alpha-type (group II) subfamily. In terms of assembly, a connexon is composed of a hexamer of connexins. As to expression, low levels were detected in skin, heart, kidney, testis, ovary, intestine. Expression not detected in brain, sciatic nerve or liver. According to PubMed:15147297 expression is detected only in horizontal cells in the inner nuclear layer of the retina and not in other neurons of the central nervous system or tissues. Detected in the outer plexiform layer of the retina (at protein level).

The protein localises to the cell membrane. It is found in the cell junction. Its subcellular location is the gap junction. In terms of biological role, one gap junction consists of a cluster of closely packed pairs of transmembrane channels, the connexons, through which materials of low MW diffuse from one cell to a neighboring cell. Involved in tracer coupling between horizontal cells of the retina. May play a role in the regulation of horizontal cell patterning. This Mus musculus (Mouse) protein is Gap junction alpha-10 protein (Gja10).